The following is a 357-amino-acid chain: Protein BIG GRAIN 1-like A (357 aa).

Disordered stretches follow at residues 1 to 146 and 208 to 233; these read MEIT…KELG and SSTC…GKSK. Over residues 75–87 the composition is skewed to basic and acidic residues; it reads DFERSRRKTDFLR. 2 stretches are compositionally biased toward low complexity: residues 88-104 and 112-127; these read HSNS…SSES and KSSA…QPKP. Polar residues predominate over residues 129–139; the sequence is RTSSVDHSSAV. Residues 208 to 223 show a composition bias toward low complexity; that stretch reads SSTCSSASSFSRSCLS.

It belongs to the BIG GRAIN 1 (BG1) plant protein family.

It is found in the cell membrane. Involved in auxin transport. Regulator of the auxin signaling pathway. This Arabidopsis thaliana (Mouse-ear cress) protein is Protein BIG GRAIN 1-like A.